Reading from the N-terminus, the 3187-residue chain is MNTQKGSLTINVHRGSLAMSIQRGSLVPRDMDSSGRDMQLRVIPAEVKFLDTMAGRVYRLPITVHNICRWNQKIRFKEPVKPQFKLMLTSLDKELASGLQMTAMVEYHPDKDEDTFDRLLISIENKTTEIPLIGLIPSCQLEIESVVNFGTLVANSKVYSKEITITNHGKAPGIFKAEYHGQLPILIFPTSGIVDAKSSMVIKVDFCADQPRIVDEEAIVILQGQPEMLLSIKAHVVEQIIELLSMSSDRRLECIHFGPVFFGSSKIKHARVYNNSPEPINWVAIIQDDAVGEELGTDIQQRTDIALNNLTYIRKIKNIDTTIIISCLPNEGTLQPYQKTVITFCFTPKLMAVGKKDIGPSYRQDYALFLRFESVGSKDGFLRDDDYKTIKSERFQKVELALTGTGLPVLLQFDPGPVLNFKPCFMGERSEIQCIIKNQCELLPVTYHFKKTANFEIDPEKGKITGGGMVDVMCSFVPHQLGVFKVKQMIEIIGLVAEEDLQSLSVKSFHHVYLAFNSICKASTKKVVMKFDPGILPSIRNPTGKFVVKDLAKRKNYAPVAMLQSAMTRTHNHRSCEEPVKDMLLAFPNDRAATIRSKDHHKHFRPIFTKVPRFNYVNHDFAYTTFEKQQKKLHENYYAMYLKYLRSVRLQKKQAERERMYSYDDTDIGLEPGSGLKSPSLSEAEIEEELSSAANSIRANRLLTTRGIASQEEESVRRKVLKGLKSEPSTPQEKHDCSLMLTPKQIHQVIVGPSVLNFGNICVNSPNTHLLHVINMLPMHVLLQLDTDLEELQKTNQFSYVILPTSSTYISMVFDSPTIGKFWKSFTFTVNNVPSGHILVVAVVQPVTLELSSNELVLRPRGFFMKTCFRGTVRLYNRQNCCAQFQWQPVNTGRGIAFSICPAKGTVEAYSSLECEVTWQQGFSSPEEGEFILHVFQGNALKLKCVAHLGRTKVLLLQPRILFSNCPQGLTTWRKAILQNVGQNHAYFKVCSQSLLPIINIIPSQGIVPFGGITVLNISCKPTVAEKFDTRAKVSIRHANVIDLRIGGSAEIADVEINPDVFNFSGAYIGGTQIIPFVIKNKGITRARVEFNLKDFPDFSMDLKDKSEEFKDPAVPYIYSLELEENTSLECSITFSPKEVTVVEFIIQVQINFFESSKLYTKYLSSSPSNPKTVPLIRPCYVQATALQSPLNLSSTKFVFEIPLHEMNPNNKVTKTQNLVLYNITKHHVTWTLDLSNTGKLFKDGTFKFSVLNGILRPNEKYNVSISFCPNRPGTYTADIPMLLNYIPVCYKILHLTGEVKSPELLFDPPFIFFTPVPLDITTVMDINILPQNYFRNSTLCVQIPTVRLLDGEEIHPLSVKFPKGRVIPGSHSGINNKLTCHLSFKSSKPVSFFTNLLFCDDRKNWFSLPVTATAENCILTIYPYMAIHLDKQNIILKNDKDEYLKKTRDGVLPPYQDAKPPSPASIKKTYTTSKFNDAEPAKGNLFIGVEVLPENLHLDESETSEEDHGSLEKEKYEQFLSLEEGTKAHYFFEKVVNAAQTWFSLFGWPEGPHSFSIPETIRRDVYKMQFYSSTSPPQKFSRQNDFSKYNKTIYDVLLHLSGKMPPGINSSQSLPVDNHEKRVIQLHLQHSSLLDFLNAQGGCISHVLPEFLLEPEDYKRWIEIMSSTNTMPVSSCTPKKKCSIVIEMSKFEAWSKRAWTDVFLQIYKVLVLSRVVPYCSNNMPPICVQNTPKVNPCFASSNIYSDSERILLSWMNINYENTRHVIWKNCHKDVIPSERWIVNFDKDLSDGLVFATQLGAYCPFLIESHFINMYTRPKSPEEYLHNCLIIVNTLYEIDFDVEIQATDICDPNPILMLMLCVYMYERLPTYLPKKVVSFECTLHDTVLNKILLKNSSSRNLVYNARIVGRDAADFSLSQKGNVVTISPRNEINVTLKFTSRFIRPAEASLLLISKPKNAVRGITMTFALKGKVLDFKAIDIIKCESPCYQFQEVTVNVKNPFHTAGDFSVILVESSTFVSSPTKLTESRQYPKHDDDMSSSGSDTDQGCSDSPNVLHTSIKSTFIREFFCSMHTVHLGVKGTSSLELRFLPFNMHVRYCVIILSNKKIGQLIYVAEGKGMTPLPSSCLPMNTSSSPVYYSTTREEGPNKKYPVLYLKCKPYQILYVDLKLPMTNEAKEKALAFAAQQQMSSIEYERRLITGTLESSSIRVAIALLGLTKIETLMLFRISKLRKPKTVSYTTEVSLPKYFYIPEKISIPWIPEPQVIKLSKAKASDGSVPLPLQFLPLQSGRYPCKILLKSRYDVRAYYVEGIVNEEQPEAKFEFETPAFEALTQNIPIKNQTNDKWTFQVTIEGEWFYGPVDLHVGPDEIVEYPLTFKPIFECVITGKLILQNEVDGREHIFDIKGVGKKPSALEHITVECQVGNVTQKHITLPHFTNTALTFKVTADLPIVWGNPQITVYPYKEILYLIHVRPWKRGILKGTITFSTTRRCTTRRKHDDYEEDTDQDQALSCLDSITEQSSILDDADTYGNFNNLRFWYNLEIHSTPGPPIEIMEMTCIALDSTCIEIPLSNPKDRGLHLEVQLTSAALNGDNEIILSPLQCTKYIVWYSPATTGYSDESIIFQPEMAEEFWYLLKLTIELPKPTTMPEIQCDLGKHVTQIIPLVNCTHETLKLQVTNSNPENFVLDINRKSQLIISPHSTTELPVLFYPSALGRADHQACINFYCTQFTEWKFYLSGVGLFPQPLDTERITTRIGLQSTIVIPFKNPTMEDVLIDIILTSVEHPRNLVMDHCWDSFIYESSAFRFSSPSEIQGIALPPKGNIDISLLFIPQIMKLHKTMVIIEMTKANGKYWPIDNFDELDIKFKSIVGIDSEEIQAIHWIYPIVGLPQAPPPKSPPVVIQCQSRKRAEEKVEIILNAGFFGFSLTPDLTEVLVIPKRNSHNFCEDPNEIPKIHEFEYEIQFESEAMKSKLESCVALYMIEKSYDIMAKRITFIFNLVFTPKKPLRSHITLKIECVTEGIWKFPIMLIATEPDTDAVIDIEGVGLFKESVFELRLKSQTRNPEPFTAHFLPGSDLEFFVKPQAGELLPFNTNGTLITVGFKPKMYCRKYKATLVIQTEEMYWKYEINGLTPTTVPPKNAKAKIDATHKTHDNMPVRPHNFVRENTKLIRTGVSSTIKGAPLVKNQ.

Residues 1746–1869 form the Calponin-homology (CH) domain; it reads SDSERILLSW…LCVYMYERLP (124 aa). Positions 2024 to 2052 are disordered; it reads KLTESRQYPKHDDDMSSSGSDTDQGCSDS. The segment covering 2026-2037 has biased composition (basic and acidic residues); that stretch reads TESRQYPKHDDD.

As to quaternary structure, interacts with CFAP65. In terms of tissue distribution, highly expressed in spermatzoa (at protein level).

The protein localises to the cytoplasm. It is found in the cytoskeleton. Its subcellular location is the flagellum basal body. In terms of biological role, plays a role in flagellar formation and sperm motility. The polypeptide is Cilia- and flagella-associated protein 47 (Homo sapiens (Human)).